We begin with the raw amino-acid sequence, 250 residues long: Probable transcriptional regulatory protein Cag_0165 (250 aa).

It belongs to the TACO1 family.

The protein localises to the cytoplasm. This chain is Probable transcriptional regulatory protein Cag_0165, found in Chlorobium chlorochromatii (strain CaD3).